Consider the following 856-residue polypeptide: MREAYLRCWIFSWKNVWVRPCQRLHFKTVLLQGSLLYTALDSYSTVQAAPKSSSGSVKFQGLAETGIMKMDMEDADMTLWTEAEFEEKCTYIVNDHPWDSGADGGTSVQAEASLPRNLLFKYAANNSKEVIGVVSKEYIPKGTRFGPLIGEVYTNDTVPKNANRKYFWRIYSREEFHHFIDGFNEEKSNWMRYVNPAHSAREQNLAACQNGMNIYFYTIKPIPANQELLVWYCRDFAERLHYPYPGELTVINLTQTESNPKQYSSEKNELYPKSVPKREYSVKEILKLDSNPSKRKDIYRSNISPFTLEKDMDGFRKNGSPDMPFYPRVVYPIRAPLPEDFLKASLAYGMERPTYITHSPLPSSTTPSPPASSSPEQSLKSSSPHSSPGNTVSPLAPGLPEHRDSYSYLNVSYGSEGLGSYPGYAPAPHLPPAFIPSYNAHYPKFLLPPYGISSNGLSTMNNINGINNFSLFPRLYPVYSNLLSGSSLPHPMLNPASLPSSLPTDGARRLLPPEHPKEVLIPAPHSAFSLTGAAASMKDESSPPSGSPTAGTAATSEHVVQPKATSSVMAAPSTDGAMNLIKNKRNMTGYKTLPYPLKKQNGKIKYECNVCAKTFGQLSNLKVHLRVHSGERPFKCQTCNKGFTQLAHLQKHYLVHTGEKPHECQVCHKRFSSTSNLKTHLRLHSGEKPYQCKVCPAKFTQFVHLKLHKRLHTRERPHKCAQCHKSYIHLCSLKVHLKGNCPAGPAAGLPLEDLTRINEEIERFDISDNADRLEDMEDSVDVTSMVEKEILAVVRKEKEETSLKVSLQRNMGNGLLSSGCSLYESSDLSLMKLPHSNPLPLVPVKVKQETVEPMDP.

The region spanning 115 to 233 is the SET domain; sequence PRNLLFKYAA…ANQELLVWYC (119 aa). Disordered stretches follow at residues 357–399 and 532–571; these read THSP…APGL and GAAASMKDESSPPSGSPTAGTAATSEHVVQPKATSSVMAA. 2 stretches are compositionally biased toward low complexity: residues 373-393 and 542-556; these read SSPEQSLKSSSPHSSPGNTVS and SPPSGSPTAGTAATS. An interaction with PIAS1 region spans residues 558-605; the sequence is HVVQPKATSSVMAAPSTDGAMNLIKNKRNMTGYKTLPYPLKKQNGKIK. 4 consecutive C2H2-type zinc fingers follow at residues 606–628, 634–656, 662–684, and 690–712; these read YECNVCAKTFGQLSNLKVHLRVH, FKCQTCNKGFTQLAHLQKHYLVH, HECQVCHKRFSSTSNLKTHLRLH, and YQCKVCPAKFTQFVHLKLHKRLH. Residue Lys847 forms a Glycyl lysine isopeptide (Lys-Gly) (interchain with G-Cter in SUMO1); alternate linkage. Residue Lys847 forms a Glycyl lysine isopeptide (Lys-Gly) (interchain with G-Cter in SUMO2); alternate linkage.

The protein belongs to the class V-like SAM-binding methyltransferase superfamily. As to quaternary structure, interacts with PRMT5. Interacts with FBXO10. Interacts with FBXO11. Interacts with multiple nuclear sumoylation E3 ligases, including CBX4, PIAS1, PIAS2, PIAS3, PIAS4, PML and RNF4, but not RANBP2. Interacts with LDB1, SMARCD3 and SMARCC1. Interacts with EEIG1; following TNFSF11/RANKL stimulation in bone marrow-derived macrophages, the interaction promotes the binding of PRDM1/BLIMP1 to the gene promoter of IRF8. In terms of processing, sumoylation at Lys-847 by PIAS1 increases transcriptional repressor activity, and is critical for plasma cell differentiation. Can be sumoylated with SUMO1 and SUMO2 by PML. Degradation of the wild-type protein mostly depends upon sumoylation, rather than ubiquitination. Desumoylated by SENP1 and SENP6. Post-translationally, ubiquitinated by SCF(FBXO11), leading to its degradation by the proteasome. In terms of tissue distribution, expressed in bone marrow macrophages (at protein level). Expressed in innate lymphocytes, including tissue-resident conventional natural killer (cNK) cells in liver. Expressed also weakly in tissue-resident natural killer (trNK) and natural killer T (NKT) cells in liver. As to expression, expressed in bone marrow, spleen and lymph node but not in brain, heart, kidney, liver, ovary or muscle. Weak expression detected in the lung. Expressed only in the yolk sac. In terms of tissue distribution, expressed in embryo, yolk sac, placenta, splenocytes, and activated T-cells.

It is found in the nucleus. The protein resides in the cytoplasm. Transcription factor that mediates a transcriptional program in various innate and adaptive immune tissue-resident lymphocyte T cell types such as tissue-resident memory T (Trm), natural killer (trNK) and natural killer T (NKT) cells and negatively regulates gene expression of proteins that promote the egress of tissue-resident T-cell populations from non-lymphoid organs. Plays a role in the development, retention and long-term establishment of adaptive and innate tissue-resident lymphocyte T cell types in non-lymphoid organs, such as the skin and gut, but also in other nonbarrier tissues like liver and kidney, and therefore may provide immediate immunological protection against reactivating infections or viral reinfection. Binds specifically to the PRDI element in the promoter of the beta-interferon gene. Drives the maturation of B-lymphocytes into Ig secreting cells. Associates with the transcriptional repressor ZNF683 to chromatin at gene promoter regions. Binds to the promoter and acts as a transcriptional repressor of IRF8, thereby promotes transcription of osteoclast differentiation factors such as NFATC1 and EEIG1. This chain is PR domain zinc finger protein 1 (Prdm1), found in Mus musculus (Mouse).